The sequence spans 339 residues: Phenylalanine--tRNA ligase alpha subunit (339 aa).

Glu-250 provides a ligand contact to Mg(2+).

The protein belongs to the class-II aminoacyl-tRNA synthetase family. Phe-tRNA synthetase alpha subunit type 1 subfamily. As to quaternary structure, tetramer of two alpha and two beta subunits. It depends on Mg(2+) as a cofactor.

It localises to the cytoplasm. It carries out the reaction tRNA(Phe) + L-phenylalanine + ATP = L-phenylalanyl-tRNA(Phe) + AMP + diphosphate + H(+). This chain is Phenylalanine--tRNA ligase alpha subunit, found in Bacteroides fragilis (strain ATCC 25285 / DSM 2151 / CCUG 4856 / JCM 11019 / LMG 10263 / NCTC 9343 / Onslow / VPI 2553 / EN-2).